The sequence spans 426 residues: Putative acid phosphatase 1 (426 aa).

A signal peptide spans 1–18; the sequence is MRVLFYVSILVIIASVHT. The Extracellular portion of the chain corresponds to 19–388; that stretch reads QLISVHVIFR…SEWVMTPLSW (370 aa). His29 (nucleophile) is an active-site residue. N-linked (GlcNAc...) asparagine glycans are attached at residues Asn37 and Asn145. Cys133 and Cys369 are oxidised to a cystine. The Proton donor role is filled by Asp276. Residues 389 to 409 form a helical membrane-spanning segment; sequence IIVAIAILLLIALILMTYFVI. The Cytoplasmic portion of the chain corresponds to 410–426; the sequence is RYKNRSIVNIKKLSLEN.

Belongs to the histidine acid phosphatase family.

It is found in the membrane. The catalysed reaction is a phosphate monoester + H2O = an alcohol + phosphate. The polypeptide is Putative acid phosphatase 1 (Caenorhabditis elegans).